The following is a 488-amino-acid chain: 3-octaprenyl-4-hydroxybenzoate carboxy-lyase (488 aa).

Mn(2+) is bound at residue Asn-172. Prenylated FMN is bound by residues 175 to 177 (IYR), 189 to 191 (RWL), and 194 to 195 (RG). Glu-238 contributes to the Mn(2+) binding site. Residue Asp-287 is the Proton donor of the active site.

Belongs to the UbiD family. In terms of assembly, homohexamer. The cofactor is prenylated FMN. Requires Mn(2+) as cofactor.

Its subcellular location is the cell membrane. The catalysed reaction is a 4-hydroxy-3-(all-trans-polyprenyl)benzoate + H(+) = a 2-(all-trans-polyprenyl)phenol + CO2. It participates in cofactor biosynthesis; ubiquinone biosynthesis. Functionally, catalyzes the decarboxylation of 3-octaprenyl-4-hydroxy benzoate to 2-octaprenylphenol, an intermediate step in ubiquinone biosynthesis. This is 3-octaprenyl-4-hydroxybenzoate carboxy-lyase from Legionella pneumophila (strain Lens).